The primary structure comprises 534 residues: Cytochrome P450 monooxygenase AN1598 (534 aa).

N3 carries N-linked (GlcNAc...) asparagine glycosylation. The chain crosses the membrane as a helical span at residues 25 to 45 (LYLEILGVLSVVYLLQTLVAY). N-linked (GlcNAc...) asparagine glycosylation occurs at N95. C464 is a heme binding site. A glycan (N-linked (GlcNAc...) asparagine) is linked at N498.

Belongs to the cytochrome P450 family. Requires heme as cofactor.

It localises to the membrane. Its pathway is secondary metabolite biosynthesis; terpenoid biosynthesis. Functionally, bifunctional terpene synthase; part of the gene cluster that mediates the biosynthesis of the diterpene ent-pimara-8(14),15-diene (PD). Within the cluster, the HMG-CoA reductase AN1593 functions in the mevalonate pathway, which produces isoprenoid precursors. The geranylgeranyl pyrophosphate (GGPP) synthase AN1592 is needed in the formation of GGPP, the precursor for diterpenes. Lastly, the pimaradiene synthase pbcA performs the 2 cyclization steps that convert GGPP to ent-pimara-8(14),15-diene. The putative roles of the remaining cluster enzymes in ent-pimara-8(14),15-diene biosynthesis is unclear. The cytochrome P450 monooxygenase AN1598, the glutathione S-transferase AN1595, the oxidoreductases AN1596 and AN1597 probably function as decorative enzymes. It is possible that in biological conditions the compound is oxidized to ent-pimara-8(14),15-dien-19-oic acid, which is a bioactive diterpene compound predominant in many plant extracts. This is Cytochrome P450 monooxygenase AN1598 from Emericella nidulans (strain FGSC A4 / ATCC 38163 / CBS 112.46 / NRRL 194 / M139) (Aspergillus nidulans).